Here is a 143-residue protein sequence, read N- to C-terminus: WW domain-containing protein C660.05 (143 aa).

The region spanning 9–44 (GLPAGWVAQWDPTYQAYFYINETFEGAQPQWEPPIP) is the WW domain. The tract at residues 115–143 (HHGPLHGPHGGFGGRGGGRMGGRGGRGRR) is disordered.

In Schizosaccharomyces pombe (strain 972 / ATCC 24843) (Fission yeast), this protein is WW domain-containing protein C660.05.